Reading from the N-terminus, the 120-residue chain is Ribosome-binding factor A (120 aa).

The protein belongs to the RbfA family. Monomer. Binds 30S ribosomal subunits, but not 50S ribosomal subunits or 70S ribosomes.

It is found in the cytoplasm. Its function is as follows. One of several proteins that assist in the late maturation steps of the functional core of the 30S ribosomal subunit. Associates with free 30S ribosomal subunits (but not with 30S subunits that are part of 70S ribosomes or polysomes). Required for efficient processing of 16S rRNA. May interact with the 5'-terminal helix region of 16S rRNA. This is Ribosome-binding factor A from Desulforamulus reducens (strain ATCC BAA-1160 / DSM 100696 / MI-1) (Desulfotomaculum reducens).